The sequence spans 154 residues: Putative thioredoxin H10 (154 aa).

Residues 24–148 (NNNNSYGQTR…LQKKTAAAAD (125 aa)) enclose the Thioredoxin domain. Active-site nucleophile residues include cysteine 74 and cysteine 77. A disulfide bond links cysteine 74 and cysteine 77.

This sequence belongs to the thioredoxin family.

The protein localises to the cytoplasm. Its function is as follows. Probable thiol-disulfide oxidoreductase that may be involved in the redox regulation of a number of cytosolic enzymes. The chain is Putative thioredoxin H10 from Arabidopsis thaliana (Mouse-ear cress).